We begin with the raw amino-acid sequence, 1782 residues long: Signal-induced proliferation-associated 1-like protein 1 (1782 aa).

Disordered stretches follow at residues 1–28 (MTSL…GAPK), 47–125 (GSSV…VSLN), and 140–171 (KNKT…RRIR). Residues 84–94 (PPRKENVKESS) are compositionally biased toward basic and acidic residues. Positions 95 to 125 (RSSQEIETSSCLESLSSKGSPVSQGSSVSLN) are enriched in low complexity. Phosphoserine is present on residues serine 162, serine 187, serine 193, serine 208, serine 255, and serine 288. The disordered stretch occupies residues 277-297 (EREKPLKRRSKSETGDSSIFR). One can recognise a Rap-GAP domain in the interval 599–816 (LMKLDEQGLN…RTRQEYLKDL (218 aa)). One can recognise a PDZ domain in the interval 953-1031 (EMTLRRNGLG…VVIIPPHDDC (79 aa)). Disordered stretches follow at residues 1069–1128 (QRNA…RLSP) and 1144–1213 (SQCR…SLAD). 7 positions are modified to phosphoserine: serine 1078, serine 1087, serine 1116, serine 1127, serine 1149, serine 1170, and serine 1181. Polar residues predominate over residues 1080 to 1093 (QVPSQLQSPMTSRL). Residues 1149–1159 (SPSNLSSSSET) show a composition bias toward low complexity. The span at 1186–1205 (DRQNTQSDISGSGKSTPSWQ) shows a compositional bias: polar residues. A phosphoserine mark is found at serine 1234 and serine 1249. Positions 1247–1285 (HLSPNKQGHSDSHYSSHSSSNTLSSNASSAHSDEKWYDG) are disordered. Positions 1261–1276 (SSHSSSNTLSSNASSA) are enriched in low complexity. Serine 1305 carries the post-translational modification Phosphoserine; by PLK2. The interval 1307-1342 (IDTASYGPSHGSTASLGASTSSPRSGPGKEKVAPLW) is disordered. Threonine 1309 bears the Phosphothreonine; by PLK2 mark. The span at 1315 to 1328 (SHGSTASLGASTSS) shows a compositional bias: low complexity. The residue at position 1328 (serine 1328) is a Phosphoserine; by CDK5. Phosphoserine is present on serine 1345. A compositionally biased stretch (basic and acidic residues) spans 1358–1368 (TEGHGMDRKAE). The interval 1358–1454 (TEGHGMDRKA…SSSGPRTFYP (97 aa)) is disordered. Phosphoserine occurs at positions 1369, 1370, 1391, 1410, and 1412. The segment covering 1378-1410 (KSQGGSSPLSRENSTFSINDAASHTSTMSSRHS) has biased composition (polar residues). Residues 1432 to 1447 (SSQLAPSFSSSSSSSS) are compositionally biased toward low complexity. Phosphoserine is present on residues serine 1507 and serine 1528. Threonine 1530 bears the Phosphothreonine mark. Phosphoserine is present on residues serine 1533, serine 1544, serine 1547, serine 1564, and serine 1567. Arginine 1580 bears the Asymmetric dimethylarginine mark. Phosphoserine is present on residues serine 1582, serine 1624, serine 1626, serine 1629, serine 1687, serine 1690, serine 1707, serine 1708, and serine 1712. A disordered region spans residues 1625–1647 (ASDSSLTDIQETRRQPIPDPGLM). Residues 1713 to 1773 (PTLASKVDQL…ASDKLKKFTE (61 aa)) are a coiled coil.

In terms of assembly, interacts with DLG4, PDLIM5, PDLIM7 and LZTS3. Interacts with the actin cytoskeleton. Interacts (via PDZ domain) with EPHA4 (via PDZ motif); controls neuronal morphology through regulation of the RAP1 (RAP1A or RAP1B) and RAP2 (RAP2A, RAP2B or RAP2C) GTPases. Post-translationally, ubiquitinated and degraded by the SCF(BTRC) following phosphorylation by PLK2. Phosphorylated at Ser-1328 by CDK5, creating a docking site for the POLO box domains of PLK2. Subsequently, PLK2 binds and phosphorylates SIPA1L1, leading to ubiquitination and degradation by the proteasome.

The protein localises to the cytoplasm. It is found in the cytoskeleton. It localises to the postsynaptic density. Its subcellular location is the synapse. The protein resides in the synaptosome. Functionally, stimulates the GTPase activity of RAP2A. Promotes reorganization of the actin cytoskeleton and recruits DLG4 to F-actin. Contributes to the regulation of dendritic spine morphogenesis. The polypeptide is Signal-induced proliferation-associated 1-like protein 1 (Sipa1l1) (Mus musculus (Mouse)).